A 424-amino-acid polypeptide reads, in one-letter code: 3-phosphoshikimate 1-carboxyvinyltransferase (424 aa).

3 residues coordinate 3-phosphoshikimate: lysine 21, serine 22, and arginine 26. Lysine 21 serves as a coordination point for phosphoenolpyruvate. 2 residues coordinate phosphoenolpyruvate: glycine 92 and arginine 120. Positions 163, 164, 165, 191, 306, and 333 each coordinate 3-phosphoshikimate. Glutamine 165 serves as a coordination point for phosphoenolpyruvate. Catalysis depends on aspartate 306, which acts as the Proton acceptor. Phosphoenolpyruvate is bound by residues arginine 337, arginine 379, and lysine 405.

Belongs to the EPSP synthase family. In terms of assembly, monomer.

The protein localises to the cytoplasm. It carries out the reaction 3-phosphoshikimate + phosphoenolpyruvate = 5-O-(1-carboxyvinyl)-3-phosphoshikimate + phosphate. Its pathway is metabolic intermediate biosynthesis; chorismate biosynthesis; chorismate from D-erythrose 4-phosphate and phosphoenolpyruvate: step 6/7. Catalyzes the transfer of the enolpyruvyl moiety of phosphoenolpyruvate (PEP) to the 5-hydroxyl of shikimate-3-phosphate (S3P) to produce enolpyruvyl shikimate-3-phosphate and inorganic phosphate. The sequence is that of 3-phosphoshikimate 1-carboxyvinyltransferase from Clostridium perfringens (strain SM101 / Type A).